The sequence spans 449 residues: NADP-specific glutamate dehydrogenase (449 aa).

The active site involves Lys125.

The protein belongs to the Glu/Leu/Phe/Val dehydrogenases family. Homohexamer.

It catalyses the reaction L-glutamate + NADP(+) + H2O = 2-oxoglutarate + NH4(+) + NADPH + H(+). The sequence is that of NADP-specific glutamate dehydrogenase from Giardia intestinalis (Giardia lamblia).